The chain runs to 448 residues: Probable glycine dehydrogenase (decarboxylating) subunit 1 (448 aa).

The protein belongs to the GcvP family. N-terminal subunit subfamily. As to quaternary structure, the glycine cleavage system is composed of four proteins: P, T, L and H. In this organism, the P 'protein' is a heterodimer of two subunits.

It catalyses the reaction N(6)-[(R)-lipoyl]-L-lysyl-[glycine-cleavage complex H protein] + glycine + H(+) = N(6)-[(R)-S(8)-aminomethyldihydrolipoyl]-L-lysyl-[glycine-cleavage complex H protein] + CO2. The glycine cleavage system catalyzes the degradation of glycine. The P protein binds the alpha-amino group of glycine through its pyridoxal phosphate cofactor; CO(2) is released and the remaining methylamine moiety is then transferred to the lipoamide cofactor of the H protein. In Staphylococcus aureus (strain USA300), this protein is Probable glycine dehydrogenase (decarboxylating) subunit 1.